The chain runs to 869 residues: Synaptonemal complex protein ZEP1 (869 aa).

Coiled-coil stretches lie at residues 64–298 (TDLE…SGFT), 330–614 (HEEK…SERY), and 641–713 (RAYH…WKVM). A disordered region spans residues 841–869 (GSHPHPANIGELFSEGSLNPYAEDPYAFG).

As to quaternary structure, interacts with CRC1. In terms of tissue distribution, highly expressed in panicles.

It localises to the nucleus. The protein localises to the chromosome. In terms of biological role, required for chromosome synapsis and regulates crossover frequency during meiosis. Acts as a transverse filament protein and constitutes the central element of the synaptonemal complex. This chain is Synaptonemal complex protein ZEP1 (ZEP1), found in Oryza sativa subsp. japonica (Rice).